Reading from the N-terminus, the 311-residue chain is Deoxyhypusine hydroxylase (311 aa).

5 HEAT-like PBS-type repeats span residues 69–95 (LKHEVAYVLGQTKNLHAAQYLRSVLEN), 102–128 (VRHEAAEALGALGDKDSLALLEDYFKN), 196–222 (ERYRAMFRLRDMGTDEACLALASGLDD), 228–254 (FKHEIAYVFGQLCNPVTVPALIKTLKD), and 261–287 (VRHEAAEALGSIATDECLPVLQSFLND). Residues H71, E72, H104, and E105 each coordinate Fe cation. Fe cation contacts are provided by H230, E231, H263, and E264.

Belongs to the deoxyhypusine hydroxylase family. It depends on Fe(2+) as a cofactor.

It is found in the cytoplasm. Its subcellular location is the nucleus. The enzyme catalyses [eIF5A protein]-deoxyhypusine + AH2 + O2 = [eIF5A protein]-hypusine + A + H2O. It participates in protein modification; eIF5A hypusination. Catalyzes the hydroxylation of the N(6)-(4-aminobutyl)-L-lysine intermediate to form hypusine, an essential post-translational modification only found in mature eIF-5A factor. This is Deoxyhypusine hydroxylase from Debaryomyces hansenii (strain ATCC 36239 / CBS 767 / BCRC 21394 / JCM 1990 / NBRC 0083 / IGC 2968) (Yeast).